The chain runs to 445 residues: Exodeoxyribonuclease 7 large subunit (445 aa).

This sequence belongs to the XseA family. In terms of assembly, heterooligomer composed of large and small subunits.

Its subcellular location is the cytoplasm. The enzyme catalyses Exonucleolytic cleavage in either 5'- to 3'- or 3'- to 5'-direction to yield nucleoside 5'-phosphates.. In terms of biological role, bidirectionally degrades single-stranded DNA into large acid-insoluble oligonucleotides, which are then degraded further into small acid-soluble oligonucleotides. The chain is Exodeoxyribonuclease 7 large subunit from Geotalea daltonii (strain DSM 22248 / JCM 15807 / FRC-32) (Geobacter daltonii).